The chain runs to 614 residues: Allergen Ara h 1, clone P17 (614 aa).

The N-terminal stretch at 1–25 (MRGRVSPLMLLLGILVLASVSATQA) is a signal peptide. 4 disordered regions span residues 72–177 (DTGA…RRFS), 334–356 (NAGG…DNEG), 372–397 (HAKS…DGEP), and 464–491 (KEQQ…SNRE). Positions 81-132 (PPGERTRGRQPGDYDDDRRQPRREEGGRWGPAEPREREREEDWRQPREDWRR) are enriched in basic and acidic residues. Residues 169–327 (FYFPSRRFST…AFNAEFNEIR (159 aa)) form the Cupin type-1 1 domain. A Cupin type-1 2 domain is found at 390–566 (INLRDGEPDL…AFPGSGEQVE (177 aa)). Residues 464-474 (KEQQQRGRREQ) show a composition bias toward basic and acidic residues. A compositionally biased stretch (acidic residues) spans 475–486 (EWEEEEEDEEEE). The N-linked (GlcNAc...) asparagine glycan is linked to Asn516. The tract at residues 572-614 (QRESHFVSARPQSQSPSSPEKEDQEEENQGGKGPLLSILKAFN) is disordered.

This sequence belongs to the 7S seed storage protein family.

This chain is Allergen Ara h 1, clone P17, found in Arachis hypogaea (Peanut).